The chain runs to 296 residues: 4-diphosphocytidyl-2-C-methyl-D-erythritol kinase (296 aa).

K11 is an active-site residue. Residue 96–106 coordinates ATP; sequence PVSSGLAGGSA. The active site involves D136.

It belongs to the GHMP kinase family. IspE subfamily.

The catalysed reaction is 4-CDP-2-C-methyl-D-erythritol + ATP = 4-CDP-2-C-methyl-D-erythritol 2-phosphate + ADP + H(+). Its pathway is isoprenoid biosynthesis; isopentenyl diphosphate biosynthesis via DXP pathway; isopentenyl diphosphate from 1-deoxy-D-xylulose 5-phosphate: step 3/6. In terms of biological role, catalyzes the phosphorylation of the position 2 hydroxy group of 4-diphosphocytidyl-2C-methyl-D-erythritol. This chain is 4-diphosphocytidyl-2-C-methyl-D-erythritol kinase, found in Anaplasma phagocytophilum (strain HZ).